The sequence spans 863 residues: Desmocollin-2 (863 aa).

The propeptide occupies 1–89 (KFIGRVNLKE…QEKVLRRAKR (89 aa)). Cadherin domains follow at residues 90-197 (RWAP…APIF), 198-309 (TETS…LPTF), 310-423 (TRSS…GPEC), 424-528 (DPRV…VIPQ), and 529-644 (RTVV…ILGK). Residues 90–644 (RWAPIPCSVP…TGNREVILGK (555 aa)) lie on the Extracellular side of the membrane. A glycan (N-linked (GlcNAc...) asparagine) is linked at Asn-120. 3 N-linked (GlcNAc...) asparagine glycosylation sites follow: Asn-346, Asn-495, and Asn-579. Residues 645–665 (WAILAILLGIALLFCILFTLV) form a helical membrane-spanning segment. The Cytoplasmic portion of the chain corresponds to 666–863 (CGATTGADKK…RTLAETCMKR (198 aa)). Ser-826, Ser-830, and Ser-835 each carry phosphoserine.

Interacts with DSP, PKP2 and JUP. Interacts with DSG3; the interaction may limit the interaction of DSC3 with p38MAPK family members and therefore repress p38MAPK signaling activation. In terms of tissue distribution, expressed in esophagus and rumen. Weakly expressed in epithelia and cardiac muscle.

The protein localises to the cell membrane. Its subcellular location is the cell junction. It is found in the desmosome. In terms of biological role, a component of desmosome cell-cell junctions which are required for positive regulation of cellular adhesion. Promotes timely incorporation of DSG2 into desmosome intercellular junctions and promotes interaction of desmosome cell junctions with intermediate filament cytokeratin, via modulation of DSP phosphorylation. Plays an important role in desmosome-mediated maintenance of intestinal epithelial cell intercellular adhesion strength and barrier function. Positively regulates wound healing of intestinal mucosa via promotion of epithelial cell migration, and also plays a role in mechanotransduction of force between intestinal epithelial cells and extracellular matrix. May contribute to epidermal cell positioning (stratification) by mediating differential adhesiveness between cells that express different isoforms. This chain is Desmocollin-2 (DSC2), found in Bos taurus (Bovine).